The sequence spans 58 residues: Ribulose bisphosphate carboxylase large chain (58 aa).

The propeptide occupies 1–2 (MS). P3 is subject to N-acetylproline. At K14 the chain carries N6,N6,N6-trimethyllysine.

This sequence belongs to the RuBisCO large chain family. Type I subfamily. In terms of assembly, heterohexadecamer of 8 large chains and 8 small chains.

Its subcellular location is the plastid. It localises to the chloroplast. It catalyses the reaction 2 (2R)-3-phosphoglycerate + 2 H(+) = D-ribulose 1,5-bisphosphate + CO2 + H2O. It carries out the reaction D-ribulose 1,5-bisphosphate + O2 = 2-phosphoglycolate + (2R)-3-phosphoglycerate + 2 H(+). Functionally, ruBisCO catalyzes two reactions: the carboxylation of D-ribulose 1,5-bisphosphate, the primary event in carbon dioxide fixation, as well as the oxidative fragmentation of the pentose substrate in the photorespiration process. Both reactions occur simultaneously and in competition at the same active site. The chain is Ribulose bisphosphate carboxylase large chain (rbcL) from Euonymus maackii (Maack's spindle tree).